The following is a 674-amino-acid chain: Dystrophia myotonica WD repeat-containing protein (674 aa).

Ala2 is subject to N-acetylalanine. Disordered stretches follow at residues 31 to 92 and 103 to 122; these read GFYK…PALP and EPDS…LGSG. The segment covering 53 to 65 has biased composition (pro residues); that stretch reads PVPPQPPQPPPGP. Positions 66–77 are enriched in low complexity; sequence ASASGPGAAGPA. The segment covering 78–90 has biased composition (pro residues); the sequence is SSPPPAGPGPGPA. Low complexity predominate over residues 107–118; that stretch reads AGAGEPPATPAG. 5 WD repeats span residues 211 to 251, 282 to 321, 324 to 363, 366 to 409, and 413 to 453; these read IDKT…ASAP, VGEG…LRGL, SYFG…VVAR, GHKS…EAAG, and AGGA…LYPH. Disordered regions lie at residues 384 to 419, 456 to 516, 532 to 573, and 637 to 674; these read EEAA…APLS, LART…EPGT, RDRG…RSRL, and DEET…GTVV. Composition is skewed to low complexity over residues 457–478 and 487–499; these read ARTR…SSRG and PRSL…LPHP. Ser495 carries the post-translational modification Phosphoserine. Composition is skewed to gly residues over residues 500–509 and 550–563; these read AGGGKAGGPG and SRGG…GGEK. Omega-N-methylarginine is present on Arg551. The WD 6 repeat unit spans residues 601–638; sequence IAQERLTVLLFLEDCIITACQEGLICTWARPGKAFTDE. The segment covering 642 to 674 has biased composition (polar residues); it reads AQTGEGSWPRSPSKSVVEGISSQPGNSPSGTVV.

As to quaternary structure, component of the USP12/DMWD/WDR48 deubiquitinating complex. Interacts with USP12; promotes its enzymatic activity. Interacts with USP46.

The protein localises to the cytoplasm. It is found in the nucleus. It localises to the perikaryon. Its subcellular location is the cell projection. The protein resides in the dendrite. Functionally, regulator of the deubiquitinating USP12/DMWD/WDR48 complex. Functions as a cofactor that promotes USP12 enzymatic activity. This Homo sapiens (Human) protein is Dystrophia myotonica WD repeat-containing protein.